Reading from the N-terminus, the 349-residue chain is Rhodopsin (349 aa).

The Extracellular segment spans residues 1-33; that stretch reads TEGPYFYIPMSNATGIVRSPYEYPQYYLVYPAA. N12 carries N-linked (GlcNAc...) asparagine glycosylation. Residues 34–58 traverse the membrane as a helical segment; sequence YAVLGAYMFFLIIFGFPVNFLTLYV. The Cytoplasmic segment spans residues 59–70; that stretch reads TIEHKKLRTPLN. The helical transmembrane segment at 71–93 threads the bilayer; the sequence is YILLNLAVADLFMVIGGFTTTIY. The Extracellular segment spans residues 94 to 107; the sequence is TSMHGYFVLGRLGC. An intrachain disulfide couples C107 to C184. The helical transmembrane segment at 108 to 130 threads the bilayer; that stretch reads NLEGFSATLGGMIGLWSLVVLAI. Residues 131-133 carry the 'Ionic lock' involved in activated form stabilization motif; that stretch reads ERW. Residues 131-149 lie on the Cytoplasmic side of the membrane; the sequence is ERWVVVCKPMSNFRFGENH. A helical transmembrane segment spans residues 150 to 170; that stretch reads AIMGVTLTWVMGLACTVPPLV. Over 171 to 199 the chain is Extracellular; the sequence is GWSRYIPEGMQCSCGIDYYTRAEGFNNDS. N197 carries an N-linked (GlcNAc...) asparagine glycan. A helical transmembrane segment spans residues 200-221; sequence YVLYMFVCHFLIPLVVIFFCYG. Residues 222–249 are Cytoplasmic-facing; sequence RLLCAVKEAAAAQQESETTQRAEREVTR. Residues 250–271 form a helical membrane-spanning segment; that stretch reads MVILMVIGFLVCWLPYASVAWY. Over 272–283 the chain is Extracellular; it reads IFTHQGSEFGPL. A helical transmembrane segment spans residues 284-305; that stretch reads FMTIPAFFAKSSSIYNPVIYIC. Position 293 is an N6-(retinylidene)lysine (K293). Over 306–349 the chain is Cytoplasmic; that stretch reads MNKQFRQCMLTTLFCGKNPFEEEEGASSTKTEASSASSSSVSPA. C320 carries the S-palmitoyl cysteine lipid modification. Residues 326–349 form a disordered region; the sequence is EEEEGASSTKTEASSASSSSVSPA. Residues 331–349 show a composition bias toward low complexity; that stretch reads ASSTKTEASSASSSSVSPA.

It belongs to the G-protein coupled receptor 1 family. Opsin subfamily. Phosphorylated on some or all of the serine and threonine residues present in the C-terminal region. In terms of processing, contains one covalently linked retinal chromophore.

It is found in the membrane. The protein localises to the cell projection. The protein resides in the cilium. It localises to the photoreceptor outer segment. Its function is as follows. Photoreceptor required for image-forming vision at low light intensity. While most salt water fish species use retinal as chromophore, most freshwater fish use 3-dehydroretinal, or a mixture of retinal and 3-dehydroretinal. Light-induced isomerization of 11-cis to all-trans retinal triggers a conformational change that activates signaling via G-proteins. Subsequent receptor phosphorylation mediates displacement of the bound G-protein alpha subunit by arrestin and terminates signaling. The protein is Rhodopsin (rho) of Myripristis violacea (Lattice soldierfish).